We begin with the raw amino-acid sequence, 120 residues long: Ribosome-binding factor A (120 aa).

It belongs to the RbfA family. As to quaternary structure, monomer. Binds 30S ribosomal subunits, but not 50S ribosomal subunits or 70S ribosomes.

It localises to the cytoplasm. In terms of biological role, one of several proteins that assist in the late maturation steps of the functional core of the 30S ribosomal subunit. Associates with free 30S ribosomal subunits (but not with 30S subunits that are part of 70S ribosomes or polysomes). Required for efficient processing of 16S rRNA. May interact with the 5'-terminal helix region of 16S rRNA. The protein is Ribosome-binding factor A of Desulforamulus reducens (strain ATCC BAA-1160 / DSM 100696 / MI-1) (Desulfotomaculum reducens).